The following is a 140-amino-acid chain: Protein E6 (140 aa).

Zinc fingers lie at residues 28-64 (CNFC…CRYC) and 101-137 (CHHC…CRQC).

It belongs to the papillomaviridae E6 protein family. Forms homodimers. Interacts with ubiquitin-protein ligase UBE3A/E6-AP; this interaction stimulates UBE3A ubiquitin activity. Interacts with host BAK1.

It is found in the host cytoplasm. Its subcellular location is the host nucleus. Plays a major role in the induction and maintenance of cellular transformation. E6 associates with host UBE3A/E6-AP ubiquitin-protein ligase and modulates its activity. Protects host keratinocytes from apoptosis by mediating the degradation of host BAK1. May also inhibit host immune response. The protein is Protein E6 of Human papillomavirus 24.